The chain runs to 410 residues: MRNLLENIKKNSQKLLNLTPKDKEKIILKLAQILRENFKIILEANKKDMANFTKSGAMKDRLLLDEKRILALCEGLEKIAYIEDPIGKISKGWKNYAGLSIQKMSIPLGLICVIYEARPSLSAEIAALMIKSSNACVFKGGSEAKFTNEAIFTLVNKVLKEFDLQDCFAMFTQRDEILQILAFDDLIDVIIPRGSSNMIQEIANNTKIPLIKQNKGLCHAFVDQSANLDMALKIILNAKCQRVSVCNALETLLIHEKIAKNFISLLIPEFKKFKVKIHAHENALAYFNNSNLKIFKANENTFDTEWLDFALSVKLVKDCDEAIEHINKHSSLHSETIISNDASNIAKFQRLINSSCIYANASTRFSDGGEFGFGGEVGISTSKLHARGPMGIEDICTYKYIINGEGQIRE.

It belongs to the gamma-glutamyl phosphate reductase family.

Its subcellular location is the cytoplasm. The enzyme catalyses L-glutamate 5-semialdehyde + phosphate + NADP(+) = L-glutamyl 5-phosphate + NADPH + H(+). It participates in amino-acid biosynthesis; L-proline biosynthesis; L-glutamate 5-semialdehyde from L-glutamate: step 2/2. Catalyzes the NADPH-dependent reduction of L-glutamate 5-phosphate into L-glutamate 5-semialdehyde and phosphate. The product spontaneously undergoes cyclization to form 1-pyrroline-5-carboxylate. In Campylobacter jejuni subsp. jejuni serotype O:23/36 (strain 81-176), this protein is Gamma-glutamyl phosphate reductase.